A 3994-amino-acid chain; its full sequence is Hybrid PKS-NRPs synthetase opdA (3994 aa).

The Ketosynthase family 3 (KS3) domain occupies 6–442 (PEPIAIVGSS…GTNSHVILES (437 aa)). Catalysis depends on for beta-ketoacyl synthase activity residues Cys-179, His-316, and His-362. Residues 559–881 (VFTGQGAQWP…LKRDSNDVEA (323 aa)) form a malonyl-CoA:ACP transacylase (MAT) domain region. Residues 951 to 1085 (HELLGRRTHD…GRLIIHLGET (135 aa)) form an N-terminal hotdog fold region. Residues 951–1251 (HELLGRRTHD…SVKPMAPPTA (301 aa)) form a dehydratase (DH) domain region. The region spanning 951 to 1252 (HELLGRRTHD…VKPMAPPTAE (302 aa)) is the PKS/mFAS DH domain. Catalysis depends on His-983, which acts as the Proton acceptor; for dehydratase activity. A C-terminal hotdog fold region spans residues 1100–1252 (LLSVDTDEGY…VKPMAPPTAE (153 aa)). Asp-1159 acts as the Proton donor; for dehydratase activity in catalysis. The tract at residues 1292-1593 (DRVVLYYVQR…VDLAFHDLPD (302 aa)) is methyltransferase (MT) domain. A ketoreductase (KR) domain region spans residues 2123–2297 (TYLMVGMAGG…ASIIHIGFVT (175 aa)). The 78-residue stretch at 2406–2483 (EAVEITQKAF…QICTNAAKQL (78 aa)) folds into the Carrier 1 domain. The residue at position 2443 (Ser-2443) is an O-(pantetheine 4'-phosphoryl)serine. The disordered stretch occupies residues 2486–2575 (QKGGQEPSEQ…FDPDDRDYNP (90 aa)). 2 stretches are compositionally biased toward polar residues: residues 2505–2514 (LHVSQGSLHT) and 2522–2546 (TETSSVGGTENTPLTSASSSPSVTD). The segment covering 2547–2556 (TVEKRDKGDI) has biased composition (basic and acidic residues). The segment covering 2557–2570 (SVDEGPNEQFDPDD) has biased composition (acidic residues). The tract at residues 2582 to 3007 (RLSSGQSRIY…SNTYMTVAKI (426 aa)) is condensation (C) domain. An adenylation (A) (KR) domain region spans residues 3043–3436 (HETNREDLAI…DGSLVFLGRL (394 aa)). Residues 3553–3630 (PKLSLRQSEL…KMTMLVDLER (78 aa)) form the Carrier 2 domain. At Ser-3590 the chain carries O-(pantetheine 4'-phosphoryl)serine. The interval 3679 to 3895 (TGATGFLGGS…FDFKKVEEVA (217 aa)) is reductase (RED) domain.

In the C-terminal section; belongs to the NRP synthetase family. Requires pantetheine 4'-phosphate as cofactor.

The protein operates within secondary metabolite biosynthesis. In terms of biological role, hybrid PKS-NRPS synthetase; part of the gene cluster that mediates the biosynthesis of oxopyrrolidines, polyketide-amino acid hybrid compounds with feature structures of tetramic acid. The polyketide chain is first assembled by the highly reducing PKS module of opdA using acetyl-CoA as the starter unit and five malonyl-CoA as the extender units. OpdC acts as trans-acting enoyl reductase and reduces the terminal alkenyl to alkane. The 17R in oxopyrrolidine A and 15R, 17S in oxopyrrolidine B are generated by non-stereospecific catalysis of the ketoreductase (KR) domain and enoyl reductases. Then the polyketides with specific configurations are transferred to the NRPS module of opdA and linked to L-tyrosine to form an amide bond. Finally, the oxopyrrolidines are offloaded through a Dieckmann cyclization catalyzed by the terminal D domain to give a tetramic acid moiety. This is Hybrid PKS-NRPs synthetase opdA from Penicillium oxalicum (strain 114-2 / CGMCC 5302) (Penicillium decumbens).